Reading from the N-terminus, the 257-residue chain is Protein-tyrosine-phosphatase IBR5 (257 aa).

The 137-residue stretch at 49–185 (FPSEILPEFL…LQEFEQGIFG (137 aa)) folds into the Tyrosine-protein phosphatase domain. Catalysis depends on Cys129, which acts as the Phosphocysteine intermediate. The tract at residues 235-257 (QEFTFGATPPKPTTGGDIAMDGS) is disordered.

It belongs to the protein-tyrosine phosphatase family. As to quaternary structure, interacts with SKP1A/ASK1 and with MPK12. Expressed in root tips and vasculature, cotyledons, stems, leaves vasculature and hydathodes, flowers, siliques, and seeds.

The protein localises to the nucleus. It catalyses the reaction O-phospho-L-tyrosyl-[protein] + H2O = L-tyrosyl-[protein] + phosphate. Its function is as follows. Required for the transduction of auxin and abscisic acid (ABA) signaling pathways. Dephosphorylates and inactivates the MAP kinase MPK12. This Arabidopsis thaliana (Mouse-ear cress) protein is Protein-tyrosine-phosphatase IBR5 (IBR5).